We begin with the raw amino-acid sequence, 486 residues long: Iron-sulfur cluster assembly SufBD family protein ycf24 (486 aa).

Belongs to the iron-sulfur cluster assembly SufBD family.

The protein localises to the plastid. It is found in the chloroplast. This is Iron-sulfur cluster assembly SufBD family protein ycf24 (ycf24) from Trieres chinensis (Marine centric diatom).